Reading from the N-terminus, the 848-residue chain is Neuroligin-3 (848 aa).

The signal sequence occupies residues 1–37 (MWLRLGPPSLSLSPKPTVGRSLCLTLWFLSLALRAST). Residues 38-709 (QAPAPTVNTH…NPRDYSTELS (672 aa)) are Extracellular-facing. N98 carries N-linked (GlcNAc...) asparagine glycosylation. An intrachain disulfide couples C106 to C141. Residues 170–195 (RKGGSGAKKQGEDLADNDGDEDEDIR) form a disordered region. The segment covering 182-194 (DLADNDGDEDEDI) has biased composition (acidic residues). Intrachain disulfides connect C340-C351 and C510-C544. The N-linked (GlcNAc...) asparagine glycan is linked to N545. Polar residues-rich tracts occupy residues 645–656 (TKVPPPDTTHSS) and 677–689 (AYSN…SWNG). A disordered region spans residues 645-694 (TKVPPPDTTHSSHITRRPNGKTWSTKRPAISPAYSNENAQGSWNGDQDAG). A helical transmembrane segment spans residues 710 to 730 (VTIAVGASLLFLNVLAFAALY). Over 731-848 (YRKDKRRQEP…LPHSHSTTRV (118 aa)) the chain is Cytoplasmic. S745 is modified (phosphoserine). At Y792 the chain carries Phosphotyrosine.

The protein belongs to the type-B carboxylesterase/lipase family. In terms of assembly, homodimer, and heterodimer with NLGN1 and NLGN2. Interacts with neurexins NRXN1, NRXN2 and NRXN3. Interaction with neurexins is mediated by heparan sulfate glycan modification on neurexin. Interacts (via its C-terminus) with DLG4/PSD-95 (via PDZ domain 3). In terms of tissue distribution, expressed in the blood vessel walls (at protein level). Detected in throughout the brain and in spinal cord. Detected in brain, and at lower levels in pancreas islet beta cells.

It is found in the cell membrane. The protein resides in the synapse. Cell surface protein involved in cell-cell-interactions via its interactions with neurexin family members. Plays a role in synapse function and synaptic signal transmission, and may mediate its effects by clustering other synaptic proteins. May promote the initial formation of synapses, but is not essential for this. May also play a role in glia-glia or glia-neuron interactions in the developing peripheral nervous system. This chain is Neuroligin-3 (NLGN3), found in Homo sapiens (Human).